Reading from the N-terminus, the 136-residue chain is Large-conductance mechanosensitive channel (136 aa).

Helical transmembrane passes span 9 to 29 and 79 to 99; these read AFAS…GAAF and IQTV…LKAI.

Belongs to the MscL family. In terms of assembly, homopentamer.

Its subcellular location is the cell inner membrane. Its function is as follows. Channel that opens in response to stretch forces in the membrane lipid bilayer. May participate in the regulation of osmotic pressure changes within the cell. The sequence is that of Large-conductance mechanosensitive channel from Shewanella putrefaciens (strain CN-32 / ATCC BAA-453).